The primary structure comprises 361 residues: S-adenosylmethionine:tRNA ribosyltransferase-isomerase (361 aa).

The protein belongs to the QueA family. As to quaternary structure, monomer.

It localises to the cytoplasm. The enzyme catalyses 7-aminomethyl-7-carbaguanosine(34) in tRNA + S-adenosyl-L-methionine = epoxyqueuosine(34) in tRNA + adenine + L-methionine + 2 H(+). Its pathway is tRNA modification; tRNA-queuosine biosynthesis. In terms of biological role, transfers and isomerizes the ribose moiety from AdoMet to the 7-aminomethyl group of 7-deazaguanine (preQ1-tRNA) to give epoxyqueuosine (oQ-tRNA). This Actinobacillus pleuropneumoniae serotype 7 (strain AP76) protein is S-adenosylmethionine:tRNA ribosyltransferase-isomerase.